Reading from the N-terminus, the 136-residue chain is Large ribosomal subunit protein uL16 (136 aa).

It belongs to the universal ribosomal protein uL16 family. In terms of assembly, part of the 50S ribosomal subunit.

Binds 23S rRNA and is also seen to make contacts with the A and possibly P site tRNAs. In Mesomycoplasma hyopneumoniae (strain 232) (Mycoplasma hyopneumoniae), this protein is Large ribosomal subunit protein uL16.